We begin with the raw amino-acid sequence, 1020 residues long: Sodium/potassium-transporting ATPase subunit alpha-2 (1020 aa).

A propeptide spanning residues 1–5 (MGRGA) is cleaved from the precursor. The disordered stretch occupies residues 1–31 (MGRGAGREYSPAATTAENGGGKKKQKEKELD). At 6-85 (GREYSPAATT…NALTPPPTTP (80 aa)) the chain is on the cytoplasmic side. Position 10 is a phosphoserine (Ser-10). The tract at residues 80–82 (PPP) is interaction with phosphoinositide-3 kinase. A helical transmembrane segment spans residues 86–106 (EWVKFCRQLFGGFSILLWIGA). Over 107–129 (ILCFLAYGIQAAMEDEPSNDNLY) the chain is Extracellular. Residues 130–150 (LGVVLAAVVIVTGCFSYYQEA) traverse the membrane as a helical segment. Topologically, residues 151–286 (KSSKIMDSFK…VGRTPIAMEI (136 aa)) are cytoplasmic. Polar residues predominate over residues 212 to 227 (DNSSLTGESEPQTRSP). The disordered stretch occupies residues 212–231 (DNSSLTGESEPQTRSPEFTH). A helical transmembrane segment spans residues 287–306 (EHFIQLITGVAVFLGVSFFV). The Extracellular segment spans residues 307-318 (LSLILGYSWLEA). Residues 319–336 (VIFLIGIIVANVPEGLLA) traverse the membrane as a helical segment. Over 337-769 (TVTVCLTLTA…EEGRLIFDNL (433 aa)) the chain is Cytoplasmic. The 4-aspartylphosphate intermediate role is filled by Asp-374. Ser-439, Ser-450, and Ser-559 each carry phosphoserine. Residue Thr-570 is modified to Phosphothreonine. Phosphoserine is present on residues Ser-587 and Ser-672. Positions 714 and 718 each coordinate Mg(2+). The chain crosses the membrane as a helical span at residues 770–789 (KKSIAYTLTSNIPEITPFLL). The Extracellular portion of the chain corresponds to 790–799 (FIIANIPLPL). Residues 800 to 820 (GTVTILCIDLGTDMVPAISLA) traverse the membrane as a helical segment. The Cytoplasmic portion of the chain corresponds to 821 to 840 (YEAAESDIMKRQPRNPQTDK). Ser-826 carries the post-translational modification Phosphoserine. Residues 841-863 (LVNERLISMAYGQIGMIQALGGF) traverse the membrane as a helical segment. Residues 864 to 915 (FTYFVILAENGFLPSRLLGIRLDWDDRSMNDLEDSYGQEWTYEQRKVVEFTC) are Extracellular-facing. Residues 916-935 (HTAFFASIVVVQWADLIICK) form a helical membrane-spanning segment. Residues 936–948 (TRRNSVFQQGMKN) are Cytoplasmic-facing. Ser-940 carries the phosphoserine; by PKA modification. The helical transmembrane segment at 949–967 (KILIFGLLEETALAAFLSY) threads the bilayer. Over 968–982 (CPGMGVALRMYPLKV) the chain is Extracellular. The helical transmembrane segment at 983-1003 (TWWFCAFPYSLLIFIYDEVRK) threads the bilayer. At 1004–1020 (LILRRYPGGWVEKETYY) the chain is on the cytoplasmic side.

It belongs to the cation transport ATPase (P-type) (TC 3.A.3) family. Type IIC subfamily. The sodium/potassium-transporting ATPase is composed of a catalytic alpha subunit, an auxiliary non-catalytic beta subunit and an additional regulatory subunit. Interacts with regulatory subunit FXYD1.

It is found in the membrane. The protein resides in the cell membrane. The catalysed reaction is K(+)(out) + Na(+)(in) + ATP + H2O = K(+)(in) + Na(+)(out) + ADP + phosphate + H(+). Its function is as follows. This is the catalytic component of the active enzyme, which catalyzes the hydrolysis of ATP coupled with the exchange of sodium and potassium ions across the plasma membrane. This action creates the electrochemical gradient of sodium and potassium, providing the energy for active transport of various nutrients. The sequence is that of Sodium/potassium-transporting ATPase subunit alpha-2 (ATP1A2) from Sus scrofa (Pig).